The following is a 130-amino-acid chain: Small ribosomal subunit protein uS8 (130 aa).

It belongs to the universal ribosomal protein uS8 family. As to quaternary structure, part of the 30S ribosomal subunit.

Functionally, one of the primary rRNA binding proteins, it binds directly to 16S rRNA central domain where it helps coordinate assembly of the platform of the 30S subunit. This is Small ribosomal subunit protein uS8 from Thermococcus sibiricus (strain DSM 12597 / MM 739).